A 513-amino-acid chain; its full sequence is Ribonuclease Y (513 aa).

The helical transmembrane segment at 4 to 24 (NTAIIIAITTGFVAFIGGYFL) threads the bilayer. One can recognise a KH domain in the interval 203-266 (TVAVIPLPNE…ETARMALEKL (64 aa)). An HD domain is found at 329–422 (VLKHSVEVAY…IQAADAISAA (94 aa)).

Belongs to the RNase Y family.

The protein resides in the cell membrane. Its function is as follows. Endoribonuclease that initiates mRNA decay. The protein is Ribonuclease Y of Desulforudis audaxviator (strain MP104C).